The primary structure comprises 345 residues: Protein RecA (345 aa).

ATP is bound at residue 67 to 74 (GPESSGKT).

It belongs to the RecA family.

Its subcellular location is the cytoplasm. Can catalyze the hydrolysis of ATP in the presence of single-stranded DNA, the ATP-dependent uptake of single-stranded DNA by duplex DNA, and the ATP-dependent hybridization of homologous single-stranded DNAs. It interacts with LexA causing its activation and leading to its autocatalytic cleavage. In Acidothermus cellulolyticus (strain ATCC 43068 / DSM 8971 / 11B), this protein is Protein RecA.